A 210-amino-acid chain; its full sequence is Oligoribonuclease (210 aa).

The 166-residue stretch at L12–L177 folds into the Exonuclease domain. The active site involves Y134.

This sequence belongs to the oligoribonuclease family.

The protein localises to the cytoplasm. Its function is as follows. 3'-to-5' exoribonuclease specific for small oligoribonucleotides. The sequence is that of Oligoribonuclease from Corynebacterium diphtheriae (strain ATCC 700971 / NCTC 13129 / Biotype gravis).